The following is a 173-amino-acid chain: Peptide methionine sulfoxide reductase MsrA (173 aa).

The active site involves Cys-10.

Belongs to the MsrA Met sulfoxide reductase family.

It catalyses the reaction L-methionyl-[protein] + [thioredoxin]-disulfide + H2O = L-methionyl-(S)-S-oxide-[protein] + [thioredoxin]-dithiol. The catalysed reaction is [thioredoxin]-disulfide + L-methionine + H2O = L-methionine (S)-S-oxide + [thioredoxin]-dithiol. Functionally, has an important function as a repair enzyme for proteins that have been inactivated by oxidation. Catalyzes the reversible oxidation-reduction of methionine sulfoxide in proteins to methionine. The polypeptide is Peptide methionine sulfoxide reductase MsrA (Acinetobacter baumannii (strain AB307-0294)).